The chain runs to 652 residues: MALFTINRYLGEEEEEDSEKQSRSKALLAKLQKQVKARGQQSVSNTPKEEEEQQDDKEHKKRKHKLQETKGKIKKSESVQNTDPTEEADSSVKKKKKRKKSLSTEDVIVKIEENESENEKSVDITGPTPSSPVQFKAEKAEELTSSSQSNYQVLGGFKEKDVQKVKRVLPQWLSQPDVIQKDIKSNLIPISEVPGICPTLLRKLQTNGIQSFFPVQAEVIPAILESVGSGLLVGPGGYRPRDVCVSAPTGSGKTLAFVIPVVQALSKRVVRQVRALAVLPTKELAQQVSNVFSAYTEGSSLKVVMITGQKSFAAEQTALSEIRGGVSHSMADIVVATPGRLVDHINKNSSFSLQHLRFLIIDEADRMIDSMHQSWLSQVTKAVYSTPGETHTSVFRRTVPGPITAASLSPPQIPLQKLLFSATLTQNPEKLQLLDLHQPRLFSSTHSLTDNPAQSQDTFHFPQGLSEYYVPCTFSKKPLIILHFLLRLKFSPALCFTNSREGAHRLYLLVKLFGGVEVAEFSSKLSPGERQKTLKDFEKGKIPLLISTDAAARGIDINGVKCVINYDAPQYIRTYIHRVGRTARAGKAGLAFTFLLKVQEKRFLKMVSDAGSPGIQKQHVHPEALKSMESRYEQVLAELGTIVKEENEKKRF.

Positions 1–145 (MALFTINRYL…KAEKAEELTS (145 aa)) are disordered. The span at 25-34 (KALLAKLQKQ) shows a compositional bias: low complexity. Basic and acidic residues-rich tracts occupy residues 66–77 (LQETKGKIKKSE) and 107–122 (VIVK…EKSV). The Q motif signature appears at 212–220 (FFPVQAEVI). In terms of domain architecture, Helicase ATP-binding spans 234-442 (GPGGYRPRDV…LLDLHQPRLF (209 aa)). Residue 247-254 (APTGSGKT) participates in ATP binding. A DEAD box motif is present at residues 362–365 (DEAD). One can recognise a Helicase C-terminal domain in the interval 480–626 (IILHFLLRLK…KQHVHPEALK (147 aa)).

The protein belongs to the DEAD box helicase family. DDX51/DBP6 subfamily.

It localises to the nucleus. The protein localises to the nucleolus. It catalyses the reaction ATP + H2O = ADP + phosphate + H(+). ATP-binding RNA helicase involved in the biogenesis of 60S ribosomal subunits. The sequence is that of ATP-dependent RNA helicase DDX51 (ddx51) from Danio rerio (Zebrafish).